The following is a 484-amino-acid chain: MNWEIVIGLETHTQLSTDSKIFSGSSTRFGAAPNTQANAVDLALPGSLPVMNRGAAERAILFGLAVGGKVAPRSVFARKNYFYPDLPKGYQISQYELPVVEGGTLSFFVGEEEKTVNLTRAHLEEDAGKSLHDEFSLASGAPASGIDLNRAGTPLLEIVTEPEMRSAAEAVAYARALHSLVVWLGICDGNMQEGSFRCDANVSVRPVGQKEFGTRTEIKNVNSFRFLERAILFEARRQIELIEDGGTVVQETRLYDADRDETRSMRSKEDAHDYRYFPDPDLPPLVIGQDWIDAVRAGMPELPAAQRARFEADYGLPAYDAAQLTVSRAMADYFEAVARALPAGQAKLAANWIMGEVAATLNREEKDIDAAPVSAAALAALINRIIDGTISNKIARDVFAAMWAGENGGDADAIIEARGLKQISDSGAIGAMIDEVLAANPAIVEEYRAGKQKAFNSLVGQIMKAAKGKANPQQVNELLKEKLG.

It belongs to the GatB/GatE family. GatB subfamily. In terms of assembly, heterotrimer of A, B and C subunits.

The catalysed reaction is L-glutamyl-tRNA(Gln) + L-glutamine + ATP + H2O = L-glutaminyl-tRNA(Gln) + L-glutamate + ADP + phosphate + H(+). The enzyme catalyses L-aspartyl-tRNA(Asn) + L-glutamine + ATP + H2O = L-asparaginyl-tRNA(Asn) + L-glutamate + ADP + phosphate + 2 H(+). Allows the formation of correctly charged Asn-tRNA(Asn) or Gln-tRNA(Gln) through the transamidation of misacylated Asp-tRNA(Asn) or Glu-tRNA(Gln) in organisms which lack either or both of asparaginyl-tRNA or glutaminyl-tRNA synthetases. The reaction takes place in the presence of glutamine and ATP through an activated phospho-Asp-tRNA(Asn) or phospho-Glu-tRNA(Gln). This is Aspartyl/glutamyl-tRNA(Asn/Gln) amidotransferase subunit B from Bordetella pertussis (strain Tohama I / ATCC BAA-589 / NCTC 13251).